We begin with the raw amino-acid sequence, 545 residues long: RAN GTPase-activating protein 2 (545 aa).

Residues 1-116 (MADILDSRPH…VAARELISED (116 aa)) form a WPP region. 9 LRR repeats span residues 213–236 (GSILSSLNLSDNALGEKGVRAFGA), 241–264 (LSSLEELYLMNDGISKEAAQAVSE), 269–296 (TENLRVLHFHNNMTGDEGALAIAEVVKR), 325–348 (CTHMEKLDLRDNMFGTEAGVSLSK), 353–380 (FKHMTELYLSYLNLEDEGAIAIVNALKE), 382–405 (ASPIEVLEMAGNDITVEAASAIAA), 410–433 (KQDLNKLNLSENELKDEGCVQIAN), 439–462 (HSKLQYIDMSTNYIRRAGARALAH), and 467–494 (KEAFKLLNIDGNIISEEGIEELKEIFKK). Positions 496–545 (PELLGALDENDPDGEEDDDDEEDEEDEENEGNGNGELESKLKNLEVNQED) are disordered. The span at 503–525 (DENDPDGEEDDDDEEDEEDEENE) shows a compositional bias: acidic residues.

It belongs to the RNA1 family. Homodimer. Interacts with WIP1 and WIP2 through its WPP domain. Component of Ran complexes at least composed of WIT1 or WIT2, RANGAP1 or RANGAP2, and WIP1 or WIP2 or WIP3. Interacts with WIT1.

The protein localises to the cytoplasm. It is found in the nucleus membrane. It localises to the cytoskeleton. Its subcellular location is the spindle. The protein resides in the phragmoplast. In terms of biological role, GTPase activator for the nuclear Ras-related regulatory protein Ran, converting it to the putatively inactive GDP-bound state. This is RAN GTPase-activating protein 2 (RANGAP2) from Arabidopsis thaliana (Mouse-ear cress).